The chain runs to 479 residues: PTS system sucrose-specific EIIBC component (479 aa).

In terms of domain architecture, PTS EIIB type-1 spans 4–87 (PAVAKELLTL…AKLTGMSEMS (84 aa)). Cys-26 functions as the Phosphocysteine intermediate; for EIIB activity in the catalytic mechanism. Transmembrane regions (helical) follow at residues 112 to 132 (IFVP…IYNL), 158 to 178 (MINT…AFSA), 182 to 202 (FGGN…PDLL), 204 to 224 (GWGF…ILGF), 232 to 252 (QGSV…ELGL), 264 to 284 (LTPL…VGPF), 303 to 323 (AGFV…ITGM), 345 to 365 (FIFP…LAVG), 376 to 396 (IAIP…MFGV), 403 to 423 (PFIA…MFNV), and 448 to 468 (IAGM…LGIG). One can recognise a PTS EIIC type-1 domain in the interval 120 to 477 (IVAGGLLMGI…GDRAKVGKKA (358 aa)).

The protein localises to the cell inner membrane. The catalysed reaction is N(pros)-phospho-L-histidyl-[protein](out) + sucrose = sucrose 6(G)-phosphate(in) + L-histidyl-[protein]. Its function is as follows. The phosphoenolpyruvate-dependent sugar phosphotransferase system (sugar PTS), a major carbohydrate active transport system, catalyzes the phosphorylation of incoming sugar substrates concomitantly with their translocation across the cell membrane. This system is involved in sucrose transport. This is PTS system sucrose-specific EIIBC component from Vibrio alginolyticus.